We begin with the raw amino-acid sequence, 139 residues long: Putative pre-16S rRNA nuclease (139 aa).

Belongs to the YqgF nuclease family.

Its subcellular location is the cytoplasm. In terms of biological role, could be a nuclease involved in processing of the 5'-end of pre-16S rRNA. This Thermoanaerobacter pseudethanolicus (strain ATCC 33223 / 39E) (Clostridium thermohydrosulfuricum) protein is Putative pre-16S rRNA nuclease.